The sequence spans 150 residues: Avidin-related protein 7 (150 aa).

The first 24 residues, 1–24, serve as a signal peptide directing secretion; that stretch reads MVHATSPLLLLLLLSLALVAPGLS. The Avidin-like domain maps to 26 to 147; that stretch reads RKCSLTGEWD…GYNNFTRQRT (122 aa). Cys28 and Cys105 form a disulfide bridge. Biotin contacts are provided by Asn36 and Ser40. 2 N-linked (GlcNAc...) asparagine glycosylation sites follow: Asn41 and Asn54. Biotin-binding residues include Tyr57, Thr59, and Asp63. An N-linked (GlcNAc...) asparagine glycan is attached at Asn93. Biotin contacts are provided by Ser95, Ser99, and Asn140. The N-linked (GlcNAc...) asparagine glycan is linked to Asn141.

Belongs to the avidin/streptavidin family. Homotetramer. Glycosylated.

It localises to the secreted. In terms of biological role, forms a strong non-covalent specific complex with biotin. This chain is Avidin-related protein 7 (AVR7), found in Gallus gallus (Chicken).